A 123-amino-acid chain; its full sequence is MARIAGIDLPKEKRVEVGLTYIYGIGINRSREILKETGVNPDTRVKDLSEEEVNTIRDYIGKNFVIEGDLRRTIALDIKRLVEIGCYRGIRHRRGLPVRGQKTKTNARTRKGPKRAISGKKNK.

A disordered region spans residues 95–123; that stretch reads GLPVRGQKTKTNARTRKGPKRAISGKKNK.

The protein belongs to the universal ribosomal protein uS13 family. As to quaternary structure, part of the 30S ribosomal subunit. Forms a loose heterodimer with protein S19. Forms two bridges to the 50S subunit in the 70S ribosome.

Functionally, located at the top of the head of the 30S subunit, it contacts several helices of the 16S rRNA. In the 70S ribosome it contacts the 23S rRNA (bridge B1a) and protein L5 of the 50S subunit (bridge B1b), connecting the 2 subunits; these bridges are implicated in subunit movement. Contacts the tRNAs in the A and P-sites. The sequence is that of Small ribosomal subunit protein uS13 from Clostridium novyi (strain NT).